Consider the following 304-residue polypeptide: Acetylglutamate kinase (304 aa).

Substrate is bound by residues 69 to 70 (GG), R91, and N202.

It belongs to the acetylglutamate kinase family. ArgB subfamily.

It localises to the cytoplasm. It catalyses the reaction N-acetyl-L-glutamate + ATP = N-acetyl-L-glutamyl 5-phosphate + ADP. It participates in amino-acid biosynthesis; L-arginine biosynthesis; N(2)-acetyl-L-ornithine from L-glutamate: step 2/4. In terms of biological role, catalyzes the ATP-dependent phosphorylation of N-acetyl-L-glutamate. The sequence is that of Acetylglutamate kinase from Caulobacter vibrioides (strain ATCC 19089 / CIP 103742 / CB 15) (Caulobacter crescentus).